We begin with the raw amino-acid sequence, 805 residues long: Ubiquitin carboxyl-terminal hydrolase 5 (805 aa).

The region spanning 159–283 (HGDALLLIDV…WVKLGGAYQS (125 aa)) is the Rhodanese domain. The segment at 359 to 380 (RNSPTVQKFSPHPPTTLSKLNT) is disordered. Residues 446-804 (VGLENIGNCC…SAYVLFYERI (359 aa)) form the USP domain. The active-site Nucleophile is cysteine 455. The active-site Proton acceptor is histidine 761.

Belongs to the peptidase C19 family.

The catalysed reaction is Thiol-dependent hydrolysis of ester, thioester, amide, peptide and isopeptide bonds formed by the C-terminal Gly of ubiquitin (a 76-residue protein attached to proteins as an intracellular targeting signal).. In Saccharomyces cerevisiae (strain ATCC 204508 / S288c) (Baker's yeast), this protein is Ubiquitin carboxyl-terminal hydrolase 5 (UBP5).